A 324-amino-acid polypeptide reads, in one-letter code: UDP-N-acetylenolpyruvoylglucosamine reductase (324 aa).

Residues 36–203 (FRAGGLAELM…TSVLFEGYPE (168 aa)) enclose the FAD-binding PCMH-type domain. Residue Arg-183 is part of the active site. Ser-232 (proton donor) is an active-site residue. Glu-302 is a catalytic residue.

This sequence belongs to the MurB family. FAD serves as cofactor.

It localises to the cytoplasm. It catalyses the reaction UDP-N-acetyl-alpha-D-muramate + NADP(+) = UDP-N-acetyl-3-O-(1-carboxyvinyl)-alpha-D-glucosamine + NADPH + H(+). The protein operates within cell wall biogenesis; peptidoglycan biosynthesis. Functionally, cell wall formation. This chain is UDP-N-acetylenolpyruvoylglucosamine reductase, found in Rhizobium johnstonii (strain DSM 114642 / LMG 32736 / 3841) (Rhizobium leguminosarum bv. viciae).